A 562-amino-acid polypeptide reads, in one-letter code: ATP synthase subunit beta, mitochondrial (562 aa).

Low complexity-rich tracts occupy residues 1–13 (MASRRLLSSLLRS) and 20–40 (SKSPISNINPKLSSSSPSSKS). 2 disordered regions span residues 1–43 (MASR…SRAS) and 58–83 (SAAAAAPPQPPPAKPEGGKGGGKITD). The N-terminal 55 residues, 1–55 (MASRRLLSSLLRSSSRRSVSKSPISNINPKLSSSSPSSKSRASPYGYLLTRAAEY), are a transit peptide targeting the mitochondrion. An ATP-binding site is contributed by 237–244 (GGAGVGKT).

Belongs to the ATPase alpha/beta chains family. F-type ATPases have 2 components, CF(1) - the catalytic core - and CF(0) - the membrane proton channel. CF(1) has five subunits: alpha(3), beta(3), gamma(1), delta(1), epsilon(1). CF(0) has three main subunits: a, b and c.

It is found in the mitochondrion. The protein localises to the mitochondrion inner membrane. The catalysed reaction is ATP + H2O + 4 H(+)(in) = ADP + phosphate + 5 H(+)(out). Mitochondrial membrane ATP synthase (F(1)F(0) ATP synthase or Complex V) produces ATP from ADP in the presence of a proton gradient across the membrane which is generated by electron transport complexes of the respiratory chain. F-type ATPases consist of two structural domains, F(1) - containing the extramembraneous catalytic core, and F(0) - containing the membrane proton channel, linked together by a central stalk and a peripheral stalk. During catalysis, ATP synthesis in the catalytic domain of F(1) is coupled via a rotary mechanism of the central stalk subunits to proton translocation. Subunits alpha and beta form the catalytic core in F(1). Rotation of the central stalk against the surrounding alpha(3)beta(3) subunits leads to hydrolysis of ATP in three separate catalytic sites on the beta subunits. The polypeptide is ATP synthase subunit beta, mitochondrial (ATPB) (Hevea brasiliensis (Para rubber tree)).